The chain runs to 350 residues: MHLLLAAAFGLLLLLPPPGAVASRKPTMCQRCRTLVDKFNQGMANTARKNFGGGNTAWEEKTLSKYEFSEIRLLEIMEGLCDSSDFECNQLLEQQEEQLEAWWQTLKKEHPNLFEWFCVHTLKACCLPGTYGPDCQECQGGSERPCSGNGYCSGDGSRQGDGSCQCHTGYKGPLCIDCTDGFFSLQRNETHSICSACDESCKTCSGPSNKDCIQCEVGWARVEDACVDVDECAAETSPCSDGQYCENVNGSYTCEDCDSTCVGCTGKGPANCKECIAGYTKESGQCTDIDECSLEEKACKRKNENCYNVPGSFVCVCPEGFEETEDACVQTAEGKVTEENPTQPPSREDL.

An N-terminal signal peptide occupies residues 1–22; it reads MHLLLAAAFGLLLLLPPPGAVA. The CXXC motif lies at 29-32; sequence CQRC. Cystine bridges form between C29-C32, C138-C152, C146-C164, and C166-C175. In terms of domain architecture, EGF-like 1 spans 134 to 176; the sequence is DCQECQGGSERPCSGNGYCSGDGSRQGDGSCQCHTGYKGPLCI. Residues 191 to 238 form an FU 1 repeat; that stretch reads HSICSACDESCKTCSGPSNKDCIQCEVGWARVEDACVDVDECAAETSP. N249 carries an N-linked (GlcNAc...) asparagine glycan. The stretch at 251–298 is one FU 2 repeat; that stretch reads SYTCEDCDSTCVGCTGKGPANCKECIAGYTKESGQCTDIDECSLEEKA. Positions 261–264 match the CXXC motif; that stretch reads CVGC. 4 cysteine pairs are disulfide-bonded: C261–C264, C292–C306, C299–C315, and C317–C328. The EGF-like 2; calcium-binding domain maps to 288–329; the sequence is DIDECSLEEKACKRKNENCYNVPGSFVCVCPEGFEETEDACV.

This sequence belongs to the CRELD family. Interacts with CHRNA4. Component of a complex containing at least CRELD2, MANF, MATN3 and PDIA4. As to expression, expressed in chondrocytes (at protein level).

Its subcellular location is the endoplasmic reticulum. It catalyses the reaction Catalyzes the rearrangement of -S-S- bonds in proteins.. In terms of biological role, protein disulfide isomerase. Might play a role in the unfolded protein response. May regulate transport of alpha4-beta2 neuronal acetylcholine receptor. This is Protein disulfide isomerase Creld2 (Creld2) from Mus musculus (Mouse).